Reading from the N-terminus, the 144-residue chain is Transcription antitermination protein NusB (144 aa).

It belongs to the NusB family.

Functionally, involved in transcription antitermination. Required for transcription of ribosomal RNA (rRNA) genes. Binds specifically to the boxA antiterminator sequence of the ribosomal RNA (rrn) operons. The protein is Transcription antitermination protein NusB of Paraburkholderia xenovorans (strain LB400).